The sequence spans 585 residues: Rhizobactin siderophore biosynthesis protein RhbC (585 aa).

Belongs to the IucA/IucC family.

It functions in the pathway siderophore biosynthesis; rhizobactin biosynthesis. The chain is Rhizobactin siderophore biosynthesis protein RhbC (rhbC) from Rhizobium meliloti (strain 1021) (Ensifer meliloti).